Consider the following 155-residue polypeptide: Ribosome maturation factor RimP (155 aa).

This sequence belongs to the RimP family.

It is found in the cytoplasm. In terms of biological role, required for maturation of 30S ribosomal subunits. The polypeptide is Ribosome maturation factor RimP (Listeria welshimeri serovar 6b (strain ATCC 35897 / DSM 20650 / CCUG 15529 / CIP 8149 / NCTC 11857 / SLCC 5334 / V8)).